The sequence spans 152 residues: Stigma-specific STIG1-like protein 1 (152 aa).

The N-terminal stretch at 1-19 (MAFVKLLVSIAITTAITIA) is a signal peptide.

This sequence belongs to the STIG1 family.

This is Stigma-specific STIG1-like protein 1 from Arabidopsis thaliana (Mouse-ear cress).